The following is a 261-amino-acid chain: Enolase-phosphatase E1 (261 aa).

Mg(2+)-binding residues include D16 and E18. Substrate-binding positions include 153–154 (SS) and K187. D212 lines the Mg(2+) pocket.

This sequence belongs to the HAD-like hydrolase superfamily. MasA/MtnC family. As to quaternary structure, monomer. Mg(2+) serves as cofactor.

Its subcellular location is the cytoplasm. It localises to the nucleus. The catalysed reaction is 5-methylsulfanyl-2,3-dioxopentyl phosphate + H2O = 1,2-dihydroxy-5-(methylsulfanyl)pent-1-en-3-one + phosphate. Its pathway is amino-acid biosynthesis; L-methionine biosynthesis via salvage pathway; L-methionine from S-methyl-5-thio-alpha-D-ribose 1-phosphate: step 3/6. It functions in the pathway amino-acid biosynthesis; L-methionine biosynthesis via salvage pathway; L-methionine from S-methyl-5-thio-alpha-D-ribose 1-phosphate: step 4/6. Functionally, bifunctional enzyme that catalyzes the enolization of 2,3-diketo-5-methylthiopentyl-1-phosphate (DK-MTP-1-P) into the intermediate 2-hydroxy-3-keto-5-methylthiopentenyl-1-phosphate (HK-MTPenyl-1-P), which is then dephosphorylated to form the acireductone 1,2-dihydroxy-3-keto-5-methylthiopentene (DHK-MTPene). The sequence is that of Enolase-phosphatase E1 from Homo sapiens (Human).